Here is a 304-residue protein sequence, read N- to C-terminus: Nod factor export ATP-binding protein I (304 aa).

The ABC transporter domain occupies 6 to 236 (IDFQQVEKRY…EIGCDVIEIY (231 aa)). 38–45 (GPNGAGKT) is an ATP binding site.

Belongs to the ABC transporter superfamily. Lipooligosaccharide exporter (TC 3.A.1.102) family. As to quaternary structure, the complex is composed of two ATP-binding proteins (NodI) and two transmembrane proteins (NodJ).

It is found in the cell inner membrane. Part of the ABC transporter complex NodIJ involved in the export of the nodulation factors (Nod factors), the bacterial signal molecules that induce symbiosis and subsequent nodulation induction. Nod factors are LCO (lipo-chitin oligosaccharide), a modified beta-1,4-linked N-acetylglucosamine oligosaccharide. This subunit is responsible for energy coupling to the transport system. In Burkholderia pseudomallei (strain 1710b), this protein is Nod factor export ATP-binding protein I.